Consider the following 176-residue polypeptide: Large ribosomal subunit protein uL6 (176 aa).

A compositionally biased stretch (basic and acidic residues) spans 151–170 (RPPEPYKGKGVRYADEQVRR). The disordered stretch occupies residues 151-176 (RPPEPYKGKGVRYADEQVRRKEAKKK).

This sequence belongs to the universal ribosomal protein uL6 family. In terms of assembly, part of the 50S ribosomal subunit.

In terms of biological role, this protein binds to the 23S rRNA, and is important in its secondary structure. It is located near the subunit interface in the base of the L7/L12 stalk, and near the tRNA binding site of the peptidyltransferase center. The polypeptide is Large ribosomal subunit protein uL6 (Shewanella halifaxensis (strain HAW-EB4)).